The sequence spans 345 residues: GMP reductase 1 (345 aa).

An NADP(+)-binding site is contributed by 26-27; it reads SR. Ser28 carries the phosphoserine modification. Residues Lys78, 129–131, and 180–181 each bind NADP(+); these read DVA and VG. K(+) contacts are provided by Gly181, Gly183, and Cys186. Cys186 functions as the Thioimidate intermediate in the catalytic mechanism. The active-site Proton donor/acceptor is the Thr188. Arg189 contacts K(+). GMP is bound by residues 219–221, 242–243, 268–270, and 286–290; these read DGG, GG, GMS, and RASEG. NADP(+)-binding positions include Met269, 285-286, and 314-317; these read YR and STCT.

Belongs to the IMPDH/GMPR family. GuaC type 1 subfamily. As to quaternary structure, homotetramer.

It carries out the reaction IMP + NH4(+) + NADP(+) = GMP + NADPH + 2 H(+). Catalyzes the irreversible NADPH-dependent deamination of GMP to IMP. It functions in the conversion of nucleobase, nucleoside and nucleotide derivatives of G to A nucleotides, and in maintaining the intracellular balance of A and G nucleotides. This Mus musculus (Mouse) protein is GMP reductase 1 (Gmpr).